A 323-amino-acid polypeptide reads, in one-letter code: Acetyl esterase (323 aa).

The Involved in the stabilization of the negatively charged intermediate by the formation of the oxyanion hole signature appears at 91 to 93 (HGG). Active-site residues include Ser-165, Asp-262, and His-292.

This sequence belongs to the 'GDXG' lipolytic enzyme family. Homodimer. Interacts with MalT and MelA.

The protein localises to the cytoplasm. Displays esterase activity towards short chain fatty esters (acyl chain length of up to 8 carbons). Able to hydrolyze triacetylglycerol (triacetin) and tributyrylglycerol (tributyrin), but not trioleylglycerol (triolein) or cholesterol oleate. Negatively regulates MalT activity by antagonizing maltotriose binding. Inhibits MelA galactosidase activity. The polypeptide is Acetyl esterase (Salmonella paratyphi A (strain AKU_12601)).